The primary structure comprises 206 residues: LexA repressor (206 aa).

Residues 28–48 (VREIGEAVGLASSSTVHGHLA) constitute a DNA-binding region (H-T-H motif). Catalysis depends on for autocatalytic cleavage activity residues serine 128 and lysine 166.

It belongs to the peptidase S24 family. Homodimer.

It catalyses the reaction Hydrolysis of Ala-|-Gly bond in repressor LexA.. Represses a number of genes involved in the response to DNA damage (SOS response), including recA and lexA. In the presence of single-stranded DNA, RecA interacts with LexA causing an autocatalytic cleavage which disrupts the DNA-binding part of LexA, leading to derepression of the SOS regulon and eventually DNA repair. The chain is LexA repressor from Bacillus pumilus (strain SAFR-032).